The following is a 573-amino-acid chain: MDYVNILLGLFFTWFLVNGLMSLRRRKISKKLPPGPFPLPIIGNLHLLGNHPHKSLAQLAKIHGPIMNLKLGQLITVVISSSVVAREVLQKQDLTFSNRFVPDVVHVRNHSDFSFVWLPVNSRWRTLRKIMNSSIFSGNKLDGNQHLRSKKVQELIDYCQKCAKNGEAVDIGRATFGTTLNLLSNTIFSKDLTNPFSDSAKEFKELVWNIMVEAWKTQFGGLLSFPLRKFDPQGIKRRMTNYFTKFLGLISGLIDERLKERNLRDNANIDVLDALLNISKRTQKRLTGIKSSSCLVSLFPTPFLPFIIICPFLYLLIFHRCKVSDLNGEGSYVGGRVQLNHTPLQIGCDRLTVSNKPRNYGDSYSSFRTCLQGLILHLNTLEWANGRTTSRIHTLLAKKHKKTISQHICTSKKIKIKKLLEHFLSFGAIVKKNLPIPPGGFSSSLFHVKWRKTLSCLGYIIPKDSQVLVSVWAIGRNSDLWENPLVFKPERFWESEIDIRGRDFELIPFGAGRRICPGLPLAIRMIPVALGSLLNSFNWKLYGGIAPKDLDMEEKFGITLAKAQPLLAIPTPL.

The next 2 membrane-spanning stretches (helical) occupy residues 3 to 23 and 298 to 318; these read YVNI…LMSL and LFPT…LLIF. Residue cysteine 516 participates in heme binding.

The protein belongs to the cytochrome P450 family. Heme serves as cofactor. In terms of tissue distribution, mostly expressed in flowers and leaves and, at low levels, in roots and stems.

The protein resides in the endoplasmic reticulum membrane. The enzyme catalyses an omega-methyl-medium-chain fatty acid + reduced [NADPH--hemoprotein reductase] + O2 = an omega-hydroxy-medium-chain fatty acid + oxidized [NADPH--hemoprotein reductase] + H2O + H(+). It catalyses the reaction decanoate + reduced [NADPH--hemoprotein reductase] + O2 = 10-hydroxydecanoate + oxidized [NADPH--hemoprotein reductase] + H2O + H(+). The catalysed reaction is dodecanoate + reduced [NADPH--hemoprotein reductase] + O2 = 12-hydroxydodecanoate + oxidized [NADPH--hemoprotein reductase] + H2O + H(+). The protein operates within lipid metabolism; fatty acid metabolism. Cytochrome P450 hydroxylase catalyzing the conversion of decanoate (capric acid) and dodecanoate (lauric acid) to their corresponding omega-hydroxy metabolites, 10-hydroxydecanoate and 12-hydroxydodecanoate, respectively; these hydroxylated components affect plant growth, including reducing root elongation. The protein is Lauric acid 10-hydroxylase of Petunia hybrida (Petunia).